The sequence spans 367 residues: Tetraacyldisaccharide 4'-kinase (367 aa).

ATP is bound at residue Val-68–Thr-75.

The protein belongs to the LpxK family.

It carries out the reaction a lipid A disaccharide + ATP = a lipid IVA + ADP + H(+). The protein operates within glycolipid biosynthesis; lipid IV(A) biosynthesis; lipid IV(A) from (3R)-3-hydroxytetradecanoyl-[acyl-carrier-protein] and UDP-N-acetyl-alpha-D-glucosamine: step 6/6. In terms of biological role, transfers the gamma-phosphate of ATP to the 4'-position of a tetraacyldisaccharide 1-phosphate intermediate (termed DS-1-P) to form tetraacyldisaccharide 1,4'-bis-phosphate (lipid IVA). The sequence is that of Tetraacyldisaccharide 4'-kinase from Chlamydia caviae (strain ATCC VR-813 / DSM 19441 / 03DC25 / GPIC) (Chlamydophila caviae).